A 420-amino-acid chain; its full sequence is Gamma-glutamyl phosphate reductase (420 aa).

It belongs to the gamma-glutamyl phosphate reductase family.

The protein localises to the cytoplasm. The enzyme catalyses L-glutamate 5-semialdehyde + phosphate + NADP(+) = L-glutamyl 5-phosphate + NADPH + H(+). The protein operates within amino-acid biosynthesis; L-proline biosynthesis; L-glutamate 5-semialdehyde from L-glutamate: step 2/2. Its function is as follows. Catalyzes the NADPH-dependent reduction of L-glutamate 5-phosphate into L-glutamate 5-semialdehyde and phosphate. The product spontaneously undergoes cyclization to form 1-pyrroline-5-carboxylate. The sequence is that of Gamma-glutamyl phosphate reductase from Laribacter hongkongensis (strain HLHK9).